A 109-amino-acid chain; its full sequence is T cell receptor alpha variable 27 (109 aa).

An N-terminal signal peptide occupies residues 1–19 (MVLKFSVSILWIQLAWVST). The 90-residue stretch at 20–109 (QLLEQSPQFL…GDTGLYLCAG (90 aa)) folds into the Ig-like domain. N-linked (GlcNAc...) asparagine glycans are attached at residues N36 and N42. A disulfide bridge links C41 with C107.

As to quaternary structure, alpha-beta TR is a heterodimer composed of an alpha and beta chain; disulfide-linked. The alpha-beta TR is associated with the transmembrane signaling CD3 coreceptor proteins to form the TR-CD3 (TcR or TCR). The assembly of alpha-beta TR heterodimers with CD3 occurs in the endoplasmic reticulum where a single alpha-beta TR heterodimer associates with one CD3D-CD3E heterodimer, one CD3G-CD3E heterodimer and one CD247 homodimer forming a stable octameric structure. CD3D-CD3E and CD3G-CD3E heterodimers preferentially associate with TR alpha and TR beta chains, respectively. The association of the CD247 homodimer is the last step of TcR assembly in the endoplasmic reticulum and is required for transport to the cell surface. In terms of assembly, (Microbial infection) Interacts with Staphylococcus aureus enterotoxin H/entH.

The protein resides in the cell membrane. In terms of biological role, v region of the variable domain of T cell receptor (TR) alpha chain that participates in the antigen recognition. Alpha-beta T cell receptors are antigen specific receptors which are essential to the immune response and are present on the cell surface of T lymphocytes. Recognize peptide-major histocompatibility (MH) (pMH) complexes that are displayed by antigen presenting cells (APC), a prerequisite for efficient T cell adaptive immunity against pathogens. Binding of alpha-beta TR to pMH complex initiates TR-CD3 clustering on the cell surface and intracellular activation of LCK that phosphorylates the ITAM motifs of CD3G, CD3D, CD3E and CD247 enabling the recruitment of ZAP70. In turn, ZAP70 phosphorylates LAT, which recruits numerous signaling molecules to form the LAT signalosome. The LAT signalosome propagates signal branching to three major signaling pathways, the calcium, the mitogen-activated protein kinase (MAPK) kinase and the nuclear factor NF-kappa-B (NF-kB) pathways, leading to the mobilization of transcription factors that are critical for gene expression and essential for T cell growth and differentiation. The T cell repertoire is generated in the thymus, by V-(D)-J rearrangement. This repertoire is then shaped by intrathymic selection events to generate a peripheral T cell pool of self-MH restricted, non-autoaggressive T cells. Post-thymic interaction of alpha-beta TR with the pMH complexes shapes TR structural and functional avidity. This is T cell receptor alpha variable 27 from Homo sapiens (Human).